Reading from the N-terminus, the 315-residue chain is WD repeat domain-containing protein 83 (315 aa).

7 WD repeats span residues 23–62 (CGQGAVRAVRFNVDGNYCLTCGSDKTLKLWNPLRGTLLRT), 65–104 (GHGYEVLDAAGSFDNSHLCSGGGDKTVVLWDVATGQVVRK), 107–146 (GHAGKVNTVQFNEEATVILSGSIDSSVRCWDCRSRKPEPV), 151–188 (EARDGISSVKVSDHEILAGSVDGRVRRYDLRMGQVTSD), 190–228 (VGSPITCTCFSRDGQCTLISSLDSTLRLLDKDTGELLGE), 231–272 (GHKN…LALA), and 275–313 (VGSNVVQSLAYHPADPCLLTAMGGSIQYWREETYEAEGG).

This sequence belongs to the WD repeat MORG1 family. As to quaternary structure, interacts with EGLN3/PHD3. Interacts with ERK signaling proteins MAP2K1/MEK1, MAP2K2/MEK2, LAMTOR3, ARAF/Raf-1, MAPK1/ERK2 and MAPK3/ERK1. Identified in the spliceosome C complex. Interacts with PARD6B and CRB3. Interacts strongly with GTP-bound RRAGA but not with inactive GDP-bound. Interacts with p62/SQSTM1. In terms of tissue distribution, highly expressed in testis and brain. Expressed at intermediate level in heart, liver and kidney. Weakly expressed in spleen and lung and absent in muscle.

It is found in the cytoplasm. The protein resides in the lysosome. It localises to the nucleus. Functionally, molecular scaffold protein for various multimeric protein complexes. Acts as a module in the assembly of a multicomponent scaffold for the ERK pathway, linking ERK responses to specific agonists. At low concentrations it enhances ERK activation, whereas high concentrations lead to the inhibition of ERK activation. Also involved in response to hypoxia by acting as a negative regulator of HIF1A/HIF-1-alpha via its interaction with EGLN3/PHD3. May promote degradation of HIF1A. May act by recruiting signaling complexes to a specific upstream activator. May also be involved in pre-mRNA splicing. Participates in tight junction development by regulating apico-basal polarity, a key step in tissue development and organization. Mechanistically, regulates the translocation of PAR6-aPKC from the cytoplasm to the apical surface by acting as an adapter between PARD6B AND CRB3. Also acts as a negative regulator of mTORC1 under nutrient-rich conditions by binding to the active Rag GTPases to inhibit mTORC1 localization to the lysosome and phosphorylation of downstream targets. This facilitates constitutive basal autophagy during nutrient availability. In Rattus norvegicus (Rat), this protein is WD repeat domain-containing protein 83 (Wdr83).